Consider the following 238-residue polypeptide: Ankyrin repeat domain-containing protein 49 (238 aa).

Residue S48 is modified to Phosphoserine. ANK repeat units lie at residues 77 to 105, 106 to 135, 139 to 168, and 172 to 205; these read LLWA…TRDE, DKYT…DVHA, DGWT…DVNA, and GLLT…GLKN.

Its subcellular location is the nucleus. In terms of biological role, may have a role in spermatogenesis where it promotes autophagy in response to serum starvation, via the NF-kappaB pathway. The polypeptide is Ankyrin repeat domain-containing protein 49 (ANKRD49) (Bos taurus (Bovine)).